The following is a 430-amino-acid chain: Mannosylglucosylglycerate synthase (430 aa).

It belongs to the glycosyltransferase group 1 family. A divalent metal cation is required as a cofactor.

It carries out the reaction (2R)-2-O-(alpha-D-glucopyranosyl)-glycerate + GDP-alpha-D-mannose = (2R)-2-O-[alpha-D-mannopyranosyl-(1-&gt;2)-alpha-D-glucopyranosyl]-glycerate + GDP + H(+). Its function is as follows. Involved in the biosynthesis of the compatible solute mannosylglucosylglycerate through a nonphosphorylating pathway. Catalyzes the synthesis of mannosylglucosylglycerate (MGG) from glucosylglycerate (GG) and GDP-mannose. The chain is Mannosylglucosylglycerate synthase from Petrotoga mobilis (strain DSM 10674 / SJ95).